A 202-amino-acid chain; its full sequence is Small ribosomal subunit protein uS2 (202 aa).

Belongs to the universal ribosomal protein uS2 family.

In Pyrococcus abyssi (strain GE5 / Orsay), this protein is Small ribosomal subunit protein uS2 (rps2).